A 376-amino-acid polypeptide reads, in one-letter code: 3-dehydroquinate synthase (376 aa).

NAD(+)-binding positions include 115-119 (GVIGD), 139-140 (TS), Lys152, and Lys161. Residues Glu194, His256, and His275 each contribute to the Zn(2+) site.

The protein belongs to the sugar phosphate cyclases superfamily. Dehydroquinate synthase family. It depends on Co(2+) as a cofactor. Zn(2+) is required as a cofactor. The cofactor is NAD(+).

It localises to the cytoplasm. It catalyses the reaction 7-phospho-2-dehydro-3-deoxy-D-arabino-heptonate = 3-dehydroquinate + phosphate. It functions in the pathway metabolic intermediate biosynthesis; chorismate biosynthesis; chorismate from D-erythrose 4-phosphate and phosphoenolpyruvate: step 2/7. In terms of biological role, catalyzes the conversion of 3-deoxy-D-arabino-heptulosonate 7-phosphate (DAHP) to dehydroquinate (DHQ). The chain is 3-dehydroquinate synthase from Rhizobium etli (strain CIAT 652).